Here is a 128-residue protein sequence, read N- to C-terminus: UPF0292 protein MJ1624 (128 aa).

Residues 23 to 105 (EKPIIVEGKR…KVNTKIRHEI (83 aa)) enclose the Toprim domain. The Mg(2+) site is built by Glu-29, Asp-74, and Asp-76.

The protein belongs to the UPF0292 family. Requires Mg(2+) as cofactor.

This Methanocaldococcus jannaschii (strain ATCC 43067 / DSM 2661 / JAL-1 / JCM 10045 / NBRC 100440) (Methanococcus jannaschii) protein is UPF0292 protein MJ1624.